A 98-amino-acid polypeptide reads, in one-letter code: NADH-ubiquinone oxidoreductase chain 4L (98 aa).

3 helical membrane passes run 1–21 (MSMV…GLLM), 29–49 (SLLC…LMIL), and 61–81 (IILL…LVMI).

It belongs to the complex I subunit 4L family. In terms of assembly, core subunit of respiratory chain NADH dehydrogenase (Complex I) which is composed of 45 different subunits.

The protein localises to the mitochondrion inner membrane. It catalyses the reaction a ubiquinone + NADH + 5 H(+)(in) = a ubiquinol + NAD(+) + 4 H(+)(out). In terms of biological role, core subunit of the mitochondrial membrane respiratory chain NADH dehydrogenase (Complex I) which catalyzes electron transfer from NADH through the respiratory chain, using ubiquinone as an electron acceptor. Part of the enzyme membrane arm which is embedded in the lipid bilayer and involved in proton translocation. The chain is NADH-ubiquinone oxidoreductase chain 4L (MT-ND4L) from Vicugna pacos (Alpaca).